A 438-amino-acid chain; its full sequence is uncharacterized protein (438 aa).

A Zn(2+)-binding site is contributed by His59. Glu62 functions as the Proton acceptor in the catalytic mechanism. Residues His63 and Glu139 each coordinate Zn(2+).

Belongs to the peptidase M16 family. Zn(2+) is required as a cofactor.

This is an uncharacterized protein from Mycobacterium bovis (strain ATCC BAA-935 / AF2122/97).